A 91-amino-acid chain; its full sequence is Small ribosomal subunit protein bS20 (91 aa).

Residues 1-18 (MPLHKSAEKRLRQSERRN) show a composition bias toward basic and acidic residues. The tract at residues 1–25 (MPLHKSAEKRLRQSERRNARNRARK) is disordered.

It belongs to the bacterial ribosomal protein bS20 family.

Functionally, binds directly to 16S ribosomal RNA. The sequence is that of Small ribosomal subunit protein bS20 from Chlorobium luteolum (strain DSM 273 / BCRC 81028 / 2530) (Pelodictyon luteolum).